The following is a 586-amino-acid chain: Aspartate--tRNA ligase (586 aa).

Glu171 serves as a coordination point for L-aspartate. An aspartate region spans residues Gln195 to Lys198. Arg217 is a binding site for L-aspartate. ATP contacts are provided by residues Arg217–Glu219 and Gln226. His448 serves as a coordination point for L-aspartate. Glu482 is an ATP binding site. Residue Arg489 participates in L-aspartate binding. Gly534–Arg537 contributes to the ATP binding site.

This sequence belongs to the class-II aminoacyl-tRNA synthetase family. Type 1 subfamily. In terms of assembly, homodimer.

Its subcellular location is the cytoplasm. The catalysed reaction is tRNA(Asp) + L-aspartate + ATP = L-aspartyl-tRNA(Asp) + AMP + diphosphate. Functionally, catalyzes the attachment of L-aspartate to tRNA(Asp) in a two-step reaction: L-aspartate is first activated by ATP to form Asp-AMP and then transferred to the acceptor end of tRNA(Asp). The polypeptide is Aspartate--tRNA ligase (Buchnera aphidicola subsp. Acyrthosiphon pisum (strain APS) (Acyrthosiphon pisum symbiotic bacterium)).